A 148-amino-acid chain; its full sequence is Flavodoxin (148 aa).

The Flavodoxin-like domain maps to 4-145 (ALIVYGSTTG…DIVGWAHDVR (142 aa)).

Belongs to the flavodoxin family. The cofactor is FMN.

Functionally, low-potential electron donor to a number of redox enzymes. The sequence is that of Flavodoxin from Nitratidesulfovibrio vulgaris (strain ATCC 29579 / DSM 644 / CCUG 34227 / NCIMB 8303 / VKM B-1760 / Hildenborough) (Desulfovibrio vulgaris).